The chain runs to 127 residues: Cytochrome b-c1 complex subunit 7, mitochondrial (127 aa).

Belongs to the UQCRB/QCR7 family. In terms of assembly, component of the ubiquinol-cytochrome c oxidoreductase (cytochrome b-c1 complex, complex III, CIII), a multisubunit enzyme composed of 10 subunits. The complex is composed of 3 respiratory subunits cytochrome b (COB), cytochrome c1 (CYT1) and Rieske protein (RIP1), 2 core protein subunits COR1 and QCR2, and 5 low-molecular weight protein subunits QCR6, QCR7, QCR8, QCR9 and QCR10. The complex exists as an obligatory dimer and forms supercomplexes (SCs) in the inner mitochondrial membrane with a monomer or a dimer of cytochrome c oxidase (complex IV, CIV), resulting in 2 different assemblies (supercomplexes III(2)IV and III(2)IV(2)).

It is found in the mitochondrion inner membrane. Component of the ubiquinol-cytochrome c oxidoreductase, a multisubunit transmembrane complex that is part of the mitochondrial electron transport chain which drives oxidative phosphorylation. Plays an important role in the uptake of multiple carbon sources such acetate, lactate, amino acids or GlcNAc present in different host niches. The sequence is that of Cytochrome b-c1 complex subunit 7, mitochondrial from Candida albicans (strain SC5314 / ATCC MYA-2876) (Yeast).